We begin with the raw amino-acid sequence, 118 residues long: Ribonuclease P protein component (118 aa).

This sequence belongs to the RnpA family. Consists of a catalytic RNA component (M1 or rnpB) and a protein subunit.

It catalyses the reaction Endonucleolytic cleavage of RNA, removing 5'-extranucleotides from tRNA precursor.. Functionally, RNaseP catalyzes the removal of the 5'-leader sequence from pre-tRNA to produce the mature 5'-terminus. It can also cleave other RNA substrates such as 4.5S RNA. The protein component plays an auxiliary but essential role in vivo by binding to the 5'-leader sequence and broadening the substrate specificity of the ribozyme. The chain is Ribonuclease P protein component from Enterococcus faecalis (strain ATCC 700802 / V583).